The primary structure comprises 446 residues: GTPase Der (446 aa).

2 consecutive EngA-type G domains span residues 3-167 and 180-353; these read PVLA…AFDE and IRLA…ASAT. GTP-binding positions include 9–16, 56–60, 119–122, 186–193, 233–237, and 298–301; these read GRPNVGKS, DTGGF, NKAE, DTAGL, and NKWD. The 85-residue stretch at 354–438 folds into the KH-like domain; the sequence is KKLATPVLTR…PMRIEMKSSR (85 aa).

Belongs to the TRAFAC class TrmE-Era-EngA-EngB-Septin-like GTPase superfamily. EngA (Der) GTPase family. Associates with the 50S ribosomal subunit.

GTPase that plays an essential role in the late steps of ribosome biogenesis. In Methylibium petroleiphilum (strain ATCC BAA-1232 / LMG 22953 / PM1), this protein is GTPase Der.